A 557-amino-acid polypeptide reads, in one-letter code: Membrane protein insertase YidC (557 aa).

A helical membrane pass occupies residues 1–21 (MNWLRNSLIAAILVITYVLFI). A disordered region spans residues 52 to 71 (SDDAVASSATEESDVPEVSV). Helical transmembrane passes span 346 to 366 (TIDY…LDFI), 369 to 389 (LVGN…AVFF), 439 to 459 (FGGC…YWMI), 470 to 490 (FFLW…PLLM), and 517 to 537 (PIGF…YWVV).

This sequence belongs to the OXA1/ALB3/YidC family. Type 1 subfamily. As to quaternary structure, interacts with the Sec translocase complex via SecD. Specifically interacts with transmembrane segments of nascent integral membrane proteins during membrane integration.

The protein localises to the cell inner membrane. Functionally, required for the insertion and/or proper folding and/or complex formation of integral membrane proteins into the membrane. Involved in integration of membrane proteins that insert both dependently and independently of the Sec translocase complex, as well as at least some lipoproteins. Aids folding of multispanning membrane proteins. This is Membrane protein insertase YidC from Saccharophagus degradans (strain 2-40 / ATCC 43961 / DSM 17024).